A 4017-amino-acid polypeptide reads, in one-letter code: Hybrid PKS-NRPS synthetase cghG (4017 aa).

The 433-residue stretch at 6–438 (QEPIAVIGMA…GTNAHAIIES (433 aa)) folds into the Ketosynthase family 3 (KS3) domain. Active-site for beta-ketoacyl synthase activity residues include cysteine 179, histidine 318, and histidine 358. The segment at 549–869 (VFTGQGAQWP…GRNKNDVVEL (321 aa)) is malonyl-CoA:ACP transacylase (MAT) domain. The N-terminal hotdog fold stretch occupies residues 936-1072 (NPILGRRCVE…ATLHVRFHEP (137 aa)). Residues 936–1243 (NPILGRRCVE…VKPFAAATAR (308 aa)) form the PKS/mFAS DH domain. The segment at 937-1240 (PILGRRCVET…AVQVKPFAAA (304 aa)) is dehydratase (DH) domain. The active-site Proton acceptor; for dehydratase activity is histidine 969. Residues 1087 to 1243 (LVKTDPGRLY…VKPFAAATAR (157 aa)) form a C-terminal hotdog fold region. Aspartate 1147 acts as the Proton donor; for dehydratase activity in catalysis. The methyltransferase (MT) domain stretch occupies residues 1398-1585 (VANVWIARMV…GVDTHCPVEK (188 aa)). A ketoreductase (KR)domain region spans residues 2127–2300 (TYFLVGLSGE…XXXXXXXXXX (174 aa)). The Carrier 1 domain occupies 2423–2499 (AVVQDSLTEN…SLAEEAMAKI (77 aa)). At serine 2458 the chain carries O-(pantetheine 4'-phosphoryl)serine. Disordered regions lie at residues 2547 to 2606 (VSEA…LQHR) and 2613 to 2632 (WAGS…AQRH). Over residues 2548–2578 (SEASGVSATTPSTRAETDASSSPALVSTPGT) the composition is skewed to polar residues. A condensation region spans residues 2626–3020 (RRAAQRHETL…GDAMETEKLQ (395 aa)). Residues 3053-3453 (EVIAQNPTAV…SGFLAIEGRI (401 aa)) form an adenylation region. Residues 3567-3586 (PKTTTASTTADGTQPAQPLT) form a disordered region. The span at 3569–3579 (TTTASTTADGT) shows a compositional bias: low complexity. The Carrier 2 domain maps to 3583 to 3661 (QPLTPTESRL…SMAALLDQAG (79 aa)). Positions 3588-3658 (TESRLATLWA…ELGSMAALLD (71 aa)) are thiolation. The residue at position 3621 (serine 3621) is an O-(pantetheine 4'-phosphoryl)serine. Positions 3696-3920 (VTGASGSLGK…DVGRLEDVAA (225 aa)) are reductase-like.

The protein in the C-terminal section; belongs to the NRP synthetase family.

The catalysed reaction is (2S,4S)-4-hydroxy-4-methylglutamate + 8 malonyl-CoA + 3 S-adenosyl-L-methionine + ATP + 8 NADPH + 11 H(+) = (2S)-3-[(2S)-3,5-dioxo-4-[(2E,4R,6R,8E,10E,12E)-4,6,12-trimethyltetradeca-2,8,10,12-tetraenoyl]pyrrolidin-2-yl]-2-hydroxy-2-methylpropanoate + AMP + 3 S-adenosyl-L-homocysteine + 8 CO2 + diphosphate + 8 NADP(+) + 8 CoA + 6 H2O. Its pathway is secondary metabolite biosynthesis. In terms of biological role, hybrid PKS-NRPS synthetase; part of the gene cluster that mediates the biosynthesis of the tetramic acid Sch210972, a potential anti-HIV fungal natural product that contains a decalin core. The PKS module of cghG together with the enoylreductase cghC catalyze the formation of the polyketide unit which is then conjugated to 4-hydroxyl-4-methyl glutamate (HMG) by the condensation domain of the cghG NRPS module. One unique structural feature of Sch210972 is the tetramic acid motif proposed to be derived from the non-proteinogenic amino acid HMG, by a Dieckmann-type condensation catalyzed by the reductase domain of cghG. The aldolase cghB catalyzes the aldol condensation of 2 molecules of pyruvic acid to yield the intermediate 4-hydroxyl-4-methyl-2-oxoglutarate (HMOG), which can then be stereoselectively transaminated by an unidentified enzyme to form HMG. The Diels-Alderase cghA then uses the Dieckmann product released by cghG as substrate and catalyzes the Diels-Alder cycloaddition to form the decalin ring of Sch210972. CghA also suppresses the nonenzymatic formation of the alternative stereoisomer. In Chaetomium globosum (strain ATCC 6205 / CBS 148.51 / DSM 1962 / NBRC 6347 / NRRL 1970) (Soil fungus), this protein is Hybrid PKS-NRPS synthetase cghG.